The sequence spans 1069 residues: Calcium-transporting ATPase 10, plasma membrane-type (1069 aa).

A disordered region spans residues 1-29 (MSGQFNNSPRGEDKDVEAGTSSFTEYEDS). Serine 2 is subject to N-acetylserine. Residues 2 to 180 (SGQFNNSPRG…NTYPQKKGRS (179 aa)) are Cytoplasmic-facing. The tract at residues 42 to 53 (ERLRRWRQAALV) is interaction with calmodulin. A helical transmembrane segment spans residues 181 to 201 (FWRFVWEASQDLTLIILIVAA). Residues 202 to 219 (VASLALGIKTEGIEKGWY) are Lumenal-facing. Residues 220 to 240 (DGISIAFAVLLVIVVTATSDY) form a helical membrane-spanning segment. Residues 241 to 369 (RQSLQFQNLN…GGETPLQVRL (129 aa)) lie on the Cytoplasmic side of the membrane. A helical membrane pass occupies residues 370 to 389 (NGVATFIGIVGLTVAGVVLF). Residues 390-426 (VLVVRYFTGHTKNEQGGPQFIGGKTKFEHVLDDLVEI) are Lumenal-facing. A helical transmembrane segment spans residues 427–444 (FTVAVTIVVVAVPEGLPL). Topologically, residues 445-844 (AVTLTLAYSM…RWGRSVYANI (400 aa)) are cytoplasmic. Aspartate 482 serves as the catalytic 4-aspartylphosphate intermediate. Mg(2+) contacts are provided by aspartate 789 and aspartate 793. Residues 845–863 (QKFIQFQLTVNVAALVINV) form a helical membrane-spanning segment. Topologically, residues 864–874 (VAAISAGEVPL) are lumenal. Residues 875 to 895 (TAVQLLWVNLIMDTLGALALA) traverse the membrane as a helical segment. The Cytoplasmic segment spans residues 896 to 915 (TEPPTDHLMDRAPVGRREPL). A helical transmembrane segment spans residues 916–938 (ITNIMWRNLFIQAMYQVTVLLIL). Residues 939 to 951 (NFRGISILHLKSK) are Lumenal-facing. A helical membrane pass occupies residues 952–973 (PNAERVKNTVIFNAFVICQVFN). Residues 974–991 (EFNARKPDEINIFRGVLR) lie on the Cytoplasmic side of the membrane. The chain crosses the membrane as a helical span at residues 992–1013 (NHLFVGIISITIVLQVVIVEFL). Residues 1014-1023 (GTFASTTKLD) are Lumenal-facing. Residues 1024-1045 (WEMWLVCIGIGSISWPLAVIGK) form a helical membrane-spanning segment. Residues 1046 to 1069 (LIPVPETPVSQYFRINRWRRNSSG) lie on the Cytoplasmic side of the membrane.

The protein belongs to the cation transport ATPase (P-type) (TC 3.A.3) family. Type IIB subfamily.

It is found in the membrane. It carries out the reaction Ca(2+)(in) + ATP + H2O = Ca(2+)(out) + ADP + phosphate + H(+). Its activity is regulated as follows. Activated by calmodulin. Functionally, this magnesium-dependent enzyme catalyzes the hydrolysis of ATP coupled with the translocation of calcium from the cytosol into the endoplasmic reticulum. The protein is Calcium-transporting ATPase 10, plasma membrane-type (ACA10) of Arabidopsis thaliana (Mouse-ear cress).